Here is a 549-residue protein sequence, read N- to C-terminus: Probable protein kinase UbiB (549 aa).

The Protein kinase domain occupies 123 to 501; that stretch reads DFDDIPLASA…QQKAHKSNYL (379 aa). Residues 129–137 and lysine 152 contribute to the ATP site; that span reads LASASISQV. The active-site Proton acceptor is the aspartate 287. 2 consecutive transmembrane segments (helical) span residues 498 to 518 and 520 to 540; these read SNYL…LINQ and ATLW…VLGW.

This sequence belongs to the ABC1 family. UbiB subfamily.

The protein resides in the cell inner membrane. It participates in cofactor biosynthesis; ubiquinone biosynthesis [regulation]. Is probably a protein kinase regulator of UbiI activity which is involved in aerobic coenzyme Q (ubiquinone) biosynthesis. This chain is Probable protein kinase UbiB, found in Shewanella halifaxensis (strain HAW-EB4).